The following is a 472-amino-acid chain: Sulfate adenylyltransferase subunit 1 (472 aa).

The 218-residue stretch at 22 to 239 (KELLRFLTCG…TVPIAGDKNY (218 aa)) folds into the tr-type G domain. A G1 region spans residues 31–38 (GSVDDGKS). 31–38 (GSVDDGKS) is a binding site for GTP. A G2 region spans residues 89 to 93 (GITID). The tract at residues 110-113 (DTPG) is G3. GTP is bound by residues 110-114 (DTPGH) and 165-168 (NKMD). The segment at 165 to 168 (NKMD) is G4. Residues 202–204 (SAL) are G5.

It belongs to the TRAFAC class translation factor GTPase superfamily. Classic translation factor GTPase family. CysN/NodQ subfamily. Heterodimer composed of CysD, the smaller subunit, and CysN.

The catalysed reaction is sulfate + ATP + H(+) = adenosine 5'-phosphosulfate + diphosphate. It participates in sulfur metabolism; hydrogen sulfide biosynthesis; sulfite from sulfate: step 1/3. In terms of biological role, with CysD forms the ATP sulfurylase (ATPS) that catalyzes the adenylation of sulfate producing adenosine 5'-phosphosulfate (APS) and diphosphate, the first enzymatic step in sulfur assimilation pathway. APS synthesis involves the formation of a high-energy phosphoric-sulfuric acid anhydride bond driven by GTP hydrolysis by CysN coupled to ATP hydrolysis by CysD. This chain is Sulfate adenylyltransferase subunit 1, found in Cellvibrio japonicus (strain Ueda107) (Pseudomonas fluorescens subsp. cellulosa).